A 95-amino-acid polypeptide reads, in one-letter code: uncharacterized protein (95 aa).

This is an uncharacterized protein from Vaccinia virus (strain Copenhagen) (VACV).